Reading from the N-terminus, the 38-residue chain is Cytochrome b6-f complex subunit 5 (38 aa).

The chain crosses the membrane as a helical span at residues 5-25; it reads LVLGIVLGLIPITLAGLFVAA.

This sequence belongs to the PetG family. The 4 large subunits of the cytochrome b6-f complex are cytochrome b6, subunit IV (17 kDa polypeptide, PetD), cytochrome f and the Rieske protein, while the 4 small subunits are PetG, PetL, PetM and PetN. The complex functions as a dimer.

The protein resides in the cellular thylakoid membrane. In terms of biological role, component of the cytochrome b6-f complex, which mediates electron transfer between photosystem II (PSII) and photosystem I (PSI), cyclic electron flow around PSI, and state transitions. PetG is required for either the stability or assembly of the cytochrome b6-f complex. In Microcystis aeruginosa (strain NIES-843 / IAM M-2473), this protein is Cytochrome b6-f complex subunit 5.